The chain runs to 214 residues: C-type lectin domain family 2 member L (214 aa).

A disordered region spans residues 1–56; sequence MEPAREPPSRARPPPPLAARPAPAPAAPRPRSPAEAEARGPEGLLRRSGSGYEGST. Residues 10 to 31 are compositionally biased toward pro residues; that stretch reads RARPPPPLAARPAPAPAAPRPR. Residue S32 is modified to Phosphoserine. The helical transmembrane segment at 69–89 threads the bilayer; that stretch reads LLLGAIAVLLFAILVVMSILA. In terms of domain architecture, C-type lectin spans 107-209; that stretch reads YGRKCYFFSE…CLMTRPWVCS (103 aa). 2 disulfide bridges follow: C128-C208 and C187-C200.

The protein resides in the membrane. The chain is C-type lectin domain family 2 member L (CLEC2L) from Homo sapiens (Human).